A 341-amino-acid chain; its full sequence is N-acetyl-gamma-glutamyl-phosphate reductase (341 aa).

Cysteine 148 is an active-site residue.

This sequence belongs to the NAGSA dehydrogenase family. Type 1 subfamily.

It is found in the cytoplasm. The enzyme catalyses N-acetyl-L-glutamate 5-semialdehyde + phosphate + NADP(+) = N-acetyl-L-glutamyl 5-phosphate + NADPH + H(+). Its pathway is amino-acid biosynthesis; L-arginine biosynthesis; N(2)-acetyl-L-ornithine from L-glutamate: step 3/4. In terms of biological role, catalyzes the NADPH-dependent reduction of N-acetyl-5-glutamyl phosphate to yield N-acetyl-L-glutamate 5-semialdehyde. The sequence is that of N-acetyl-gamma-glutamyl-phosphate reductase from Pseudothermotoga lettingae (strain ATCC BAA-301 / DSM 14385 / NBRC 107922 / TMO) (Thermotoga lettingae).